The sequence spans 696 residues: SEC14 domain and spectrin repeat-containing protein 1 (696 aa).

A CRAL-TRIO domain is found at 1–153 (MEASVILPIL…DFGGSLTYDH (153 aa)). Spectrin repeat units lie at residues 275 to 378 (EEIQ…NLLQ), 381 to 494 (LEFH…LKML), and 500 to 602 (FKCE…HRLE).

The protein belongs to the SOLO family. Interacts (via the spectrin 1 repeat) with TRPC4 and TRPC5 (via CIRB domain). Interacts with CTNNB1. As to expression, broad expression. High expression in thalamus and brain. Significantly expressed in vasculature.

May act as the primary docking protein directing membrane turnover and assembly of the transient receptor potential channels TRPC4 and TRPC5. Binds phospholipids such as phosphatidylinositol monophosphates, phosphatidylinositol diphosphates (PIP2s) and phosphatidic acid, but not less polar lipids including phosphatidylcholine, phosphatidylserine, and phosphatidylinositol. The binding to PIP2s is calcium dependent. Might be involved in the plasma membrane localization of CTNNB1. This is SEC14 domain and spectrin repeat-containing protein 1 (SESTD1) from Homo sapiens (Human).